Reading from the N-terminus, the 910-residue chain is p53-induced death domain-containing protein 1 (910 aa).

The disordered stretch occupies residues 1 to 25; that stretch reads MAATVEGPELEAAAAAGDASEDSDA. Alanine 2 carries the N-acetylalanine modification. 7 LRR repeats span residues 126 to 147, 149 to 171, 172 to 194, 195 to 216, 218 to 240, 241 to 263, and 264 to 285; these read HLAH…VLQM, GLGA…GALP, ALTF…GALS, TLQR…IGGL, SLLE…AGLR, SLRL…ARLP, and LLTR…LLDA. Phosphoserine is present on residues serine 299 and serine 305. 2 ZU5 domains span residues 322–454 and 455–596; these read DLDS…VSRP and VSNA…WYTT. Peptidase S68 regions lie at residues 423 to 452 and 566 to 594; these read DLET…LVVS and DITA…WLWY. Residues histidine 444, serine 446, histidine 586, and serine 588 contribute to the active site. The segment at 580–716 is UPA domain; the sequence is ARFQVTHFSW…TTTLDREAQA (137 aa). One can recognise a Death domain in the interval 788–873; that stretch reads TQSNLLSVAG…DVAEEVRAVL (86 aa). Residues 884–910 are disordered; it reads IRRMGLAPKDPALPGSSAPQPPEPAQA.

In terms of assembly, forms a complex named the PIDDosome with CASP2 and CRADD. Forms a complex with IKBKG and RIPK1. Interacts with FADD and MADD. Undergoes autoproteolytic processing whose extent either directs cells towards survival or apoptotic pathways. Autoproteolytically cleaved into two main fragments PIDD-N and PIDD-C. PIDD-C can be further processed into PIDD-CC, a processing which is enhanced by DNA damage. The cleavage producing PIDD-C is required for translocation of PIDD1 to the nucleus upon DNA damage and activation of NF-kappa-B. PIDD-CC mediates the interaction with CRADD and the cleavage producing PIDD-CC is required for the activation of CASP2. PIDD-N remains associated with PIDD-C and PIDD-CC after cleavage. As to expression, ubiquitous.

It is found in the cytoplasm. The protein localises to the nucleus. Component of the DNA damage/stress response pathway that functions downstream of p53/TP53 and can either promote cell survival or apoptosis. Associated with CRADD and the CASP2 caspase, it forms the PIDDosome a complex that activates CASP2 and triggers apoptosis. Associated with IKBKG and RIPK1, it enhances sumoylation and ubiquitination of IKBKG which is important for activation of the transcription factor NF-kappa-B. In Homo sapiens (Human), this protein is p53-induced death domain-containing protein 1.